A 191-amino-acid chain; its full sequence is Large ribosomal subunit protein uL5 (191 aa).

Belongs to the universal ribosomal protein uL5 family. As to quaternary structure, part of the 50S ribosomal subunit; part of the 5S rRNA/L5/L18/L25 subcomplex. Contacts the 5S rRNA and the P site tRNA. Forms a bridge to the 30S subunit in the 70S ribosome.

In terms of biological role, this is one of the proteins that bind and probably mediate the attachment of the 5S RNA into the large ribosomal subunit, where it forms part of the central protuberance. In the 70S ribosome it contacts protein S13 of the 30S subunit (bridge B1b), connecting the 2 subunits; this bridge is implicated in subunit movement. Contacts the P site tRNA; the 5S rRNA and some of its associated proteins might help stabilize positioning of ribosome-bound tRNAs. The polypeptide is Large ribosomal subunit protein uL5 (Corynebacterium glutamicum (strain R)).